The primary structure comprises 478 residues: V-type proton ATPase subunit H (478 aa).

It belongs to the V-ATPase H subunit family. In terms of assembly, V-ATPase is a heteromultimeric enzyme composed of a peripheral catalytic V1 complex (components A to H) attached to an integral membrane V0 proton pore complex (components: a, c, c', c'', d, e, f and VOA1). Interacts with YND1.

Its subcellular location is the vacuole membrane. Its function is as follows. Subunit of the V1 complex of vacuolar(H+)-ATPase (V-ATPase), a multisubunit enzyme composed of a peripheral complex (V1) that hydrolyzes ATP and a membrane integral complex (V0) that translocates protons. V-ATPase is responsible for acidifying and maintaining the pH of intracellular compartments. This subunit is essential for activity, but not assembly, of the enzyme complex. This subunit is also required for silencing the ATPase activity of V-ATPase when V1 is detached from V0. The chain is V-type proton ATPase subunit H from Saccharomyces cerevisiae (strain ATCC 204508 / S288c) (Baker's yeast).